The following is a 156-amino-acid chain: S-ribosylhomocysteine lyase (156 aa).

H56, H60, and C123 together coordinate Fe cation.

Belongs to the LuxS family. Homodimer. It depends on Fe cation as a cofactor.

It catalyses the reaction S-(5-deoxy-D-ribos-5-yl)-L-homocysteine = (S)-4,5-dihydroxypentane-2,3-dione + L-homocysteine. Functionally, involved in the synthesis of autoinducer 2 (AI-2) which is secreted by bacteria and is used to communicate both the cell density and the metabolic potential of the environment. The regulation of gene expression in response to changes in cell density is called quorum sensing. Catalyzes the transformation of S-ribosylhomocysteine (RHC) to homocysteine (HC) and 4,5-dihydroxy-2,3-pentadione (DPD). The chain is S-ribosylhomocysteine lyase from Staphylococcus aureus (strain bovine RF122 / ET3-1).